Consider the following 201-residue polypeptide: Recombination protein RecR (201 aa).

The C4-type zinc finger occupies 60 to 75 (CSECGNMDVSDPCTVC). In terms of domain architecture, Toprim spans 83–178 (AAICVVETVG…SITSLARGVP (96 aa)).

It belongs to the RecR family.

May play a role in DNA repair. It seems to be involved in an RecBC-independent recombinational process of DNA repair. It may act with RecF and RecO. This Maricaulis maris (strain MCS10) (Caulobacter maris) protein is Recombination protein RecR.